Consider the following 392-residue polypeptide: Phosphoglycerate kinase (392 aa).

Residues 21–23 (DMN), Arg-36, 59–62 (HLGR), Arg-114, and Arg-147 contribute to the substrate site. ATP is bound by residues Lys-198, Glu-320, and 346–349 (GGDT).

It belongs to the phosphoglycerate kinase family. In terms of assembly, monomer.

The protein resides in the cytoplasm. It carries out the reaction (2R)-3-phosphoglycerate + ATP = (2R)-3-phospho-glyceroyl phosphate + ADP. Its pathway is carbohydrate degradation; glycolysis; pyruvate from D-glyceraldehyde 3-phosphate: step 2/5. This chain is Phosphoglycerate kinase (pgk), found in Neisseria meningitidis serogroup B (strain ATCC BAA-335 / MC58).